The primary structure comprises 166 residues: 2-C-methyl-D-erythritol 2,4-cyclodiphosphate synthase (166 aa).

The a divalent metal cation site is built by Asp-11 and His-13. Residues 11–13 (DVH) and 40–41 (HS) each bind 4-CDP-2-C-methyl-D-erythritol 2-phosphate. His-48 is a binding site for a divalent metal cation. 4-CDP-2-C-methyl-D-erythritol 2-phosphate contacts are provided by residues 62–64 (DLG), 135–138 (TTSD), Phe-142, and Arg-145.

It belongs to the IspF family. As to quaternary structure, homotrimer. It depends on a divalent metal cation as a cofactor.

The enzyme catalyses 4-CDP-2-C-methyl-D-erythritol 2-phosphate = 2-C-methyl-D-erythritol 2,4-cyclic diphosphate + CMP. The protein operates within isoprenoid biosynthesis; isopentenyl diphosphate biosynthesis via DXP pathway; isopentenyl diphosphate from 1-deoxy-D-xylulose 5-phosphate: step 4/6. Its function is as follows. Involved in the biosynthesis of isopentenyl diphosphate (IPP) and dimethylallyl diphosphate (DMAPP), two major building blocks of isoprenoid compounds. Catalyzes the conversion of 4-diphosphocytidyl-2-C-methyl-D-erythritol 2-phosphate (CDP-ME2P) to 2-C-methyl-D-erythritol 2,4-cyclodiphosphate (ME-CPP) with a corresponding release of cytidine 5-monophosphate (CMP). This chain is 2-C-methyl-D-erythritol 2,4-cyclodiphosphate synthase, found in Pseudarthrobacter chlorophenolicus (strain ATCC 700700 / DSM 12829 / CIP 107037 / JCM 12360 / KCTC 9906 / NCIMB 13794 / A6) (Arthrobacter chlorophenolicus).